Here is a 212-residue protein sequence, read N- to C-terminus: Glycerol-3-phosphate acyltransferase (212 aa).

The next 5 helical transmembrane spans lie at 9 to 29, 67 to 87, 95 to 115, 128 to 148, and 168 to 190; these read AACLVPVILTALLLLAIGYLL, GPALVVFLIDVGKGALAVLLA, WLQVLAGLAALAGHIWPVWLG, MFLGLAWPVGLACFGLFMAVI, and LMVVSGGSSAYVVVSLVASLMVL.

This sequence belongs to the PlsY family. As to quaternary structure, probably interacts with PlsX.

Its subcellular location is the cell inner membrane. It carries out the reaction an acyl phosphate + sn-glycerol 3-phosphate = a 1-acyl-sn-glycero-3-phosphate + phosphate. It functions in the pathway lipid metabolism; phospholipid metabolism. Catalyzes the transfer of an acyl group from acyl-phosphate (acyl-PO(4)) to glycerol-3-phosphate (G3P) to form lysophosphatidic acid (LPA). This enzyme utilizes acyl-phosphate as fatty acyl donor, but not acyl-CoA or acyl-ACP. This Parasynechococcus marenigrum (strain WH8102) protein is Glycerol-3-phosphate acyltransferase.